Reading from the N-terminus, the 455-residue chain is DNA repair protein RadA (455 aa).

A C4-type zinc finger spans residues C12–C29. G95–S102 provides a ligand contact to ATP. A RadA KNRFG motif motif is present at residues K252–G256. The lon-protease-like stretch occupies residues D351 to Q455.

It belongs to the RecA family. RadA subfamily.

Functionally, DNA-dependent ATPase involved in processing of recombination intermediates, plays a role in repairing DNA breaks. Stimulates the branch migration of RecA-mediated strand transfer reactions, allowing the 3' invading strand to extend heteroduplex DNA faster. Binds ssDNA in the presence of ADP but not other nucleotides, has ATPase activity that is stimulated by ssDNA and various branched DNA structures, but inhibited by SSB. Does not have RecA's homology-searching function. This is DNA repair protein RadA from Chlamydia muridarum (strain MoPn / Nigg).